A 351-amino-acid polypeptide reads, in one-letter code: Inositol monophosphatase 3 (351 aa).

The chain crosses the membrane as a helical span at residues 11–31 (LGIGVFCLLALGVLYHVYSGF). Positions 121, 162, 164, 165, and 288 each coordinate Mg(2+). Glu121 contacts substrate. Substrate is bound by residues 164–167 (LDAT) and Asp288.

The protein belongs to the inositol monophosphatase superfamily. Requires Mg(2+) as cofactor.

The protein resides in the membrane. It carries out the reaction a myo-inositol phosphate + H2O = myo-inositol + phosphate. The protein operates within polyol metabolism; myo-inositol biosynthesis; myo-inositol from D-glucose 6-phosphate: step 2/2. This Xenopus laevis (African clawed frog) protein is Inositol monophosphatase 3 (bpnt2).